Reading from the N-terminus, the 65-residue chain is Ringhalexin (65 aa).

Intrachain disulfides connect Cys3-Cys24, Cys17-Cys42, Cys46-Cys57, and Cys58-Cys63.

Expressed by the venom gland.

It is found in the secreted. Functionally, has anticoagulant activity, since it is able to inhibit the activation of coagulation factor X (F10) by coagulation factor VIIa (F7) (IC(50)=123.8 nM). Also shows weak irreversible neurotoxicity. The sequence is that of Ringhalexin from Hemachatus haemachatus (Rinkhals).